A 287-amino-acid polypeptide reads, in one-letter code: Large ribosomal subunit protein uL2 (287 aa).

The segment at 221-287 (RGSVMNPCDH…SKRSRGGRDS (67 aa)) is disordered. A compositionally biased stretch (basic residues) spans 258–287 (KTRKRNKPSNKFVLRKRRKTSKRSRGGRDS).

It belongs to the universal ribosomal protein uL2 family. Part of the 50S ribosomal subunit. Forms a bridge to the 30S subunit in the 70S ribosome.

One of the primary rRNA binding proteins. Required for association of the 30S and 50S subunits to form the 70S ribosome, for tRNA binding and peptide bond formation. It has been suggested to have peptidyltransferase activity; this is somewhat controversial. Makes several contacts with the 16S rRNA in the 70S ribosome. The polypeptide is Large ribosomal subunit protein uL2 (Synechococcus sp. (strain RCC307)).